Reading from the N-terminus, the 421-residue chain is Trimethyllysine dioxygenase, mitochondrial (421 aa).

The N-terminal 15 residues, 1 to 15, are a transit peptide targeting the mitochondrion; sequence MWYHKLLHQQSRLQN. N6-acetyllysine is present on residues lysine 179 and lysine 236. Histidine 242, aspartate 244, and histidine 389 together coordinate Fe cation.

The protein belongs to the gamma-BBH/TMLD family. In terms of assembly, homodimer. The cofactor is Fe(2+). It depends on L-ascorbate as a cofactor.

It localises to the mitochondrion matrix. The enzyme catalyses N(6),N(6),N(6)-trimethyl-L-lysine + 2-oxoglutarate + O2 = (3S)-3-hydroxy-N(6),N(6),N(6)-trimethyl-L-lysine + succinate + CO2. It functions in the pathway amine and polyamine biosynthesis; carnitine biosynthesis. Converts trimethyllysine (TML) into hydroxytrimethyllysine (HTML). This is Trimethyllysine dioxygenase, mitochondrial (Tmlhe) from Rattus norvegicus (Rat).